The primary structure comprises 272 residues: Elongation factor Ts (272 aa).

The interval 76-79 is involved in Mg(2+) ion dislocation from EF-Tu; that stretch reads TDFV.

The protein belongs to the EF-Ts family.

The protein localises to the cytoplasm. In terms of biological role, associates with the EF-Tu.GDP complex and induces the exchange of GDP to GTP. It remains bound to the aminoacyl-tRNA.EF-Tu.GTP complex up to the GTP hydrolysis stage on the ribosome. The sequence is that of Elongation factor Ts from Corynebacterium jeikeium (strain K411).